We begin with the raw amino-acid sequence, 382 residues long: Fimbrial usher domain-containing protein YdeT (382 aa).

The protein is Fimbrial usher domain-containing protein YdeT (ydeT) of Escherichia coli O157:H7.